The following is a 141-amino-acid chain: Flagellar assembly factor FliW 1 (141 aa).

This sequence belongs to the FliW family. As to quaternary structure, interacts with translational regulator CsrA and flagellin(s).

It is found in the cytoplasm. Functionally, acts as an anti-CsrA protein, binds CsrA and prevents it from repressing translation of its target genes, one of which is flagellin. Binds to flagellin and participates in the assembly of the flagellum. This Desulfotalea psychrophila (strain LSv54 / DSM 12343) protein is Flagellar assembly factor FliW 1.